The following is a 205-amino-acid chain: Carboxysome shell protein CsoS1D (205 aa).

2 BMC circularly permuted domains span residues 3–100 (ELRT…TREY) and 106–205 (VVMW…TCRS). The short motif at 68–69 (ER) is the Gates the pore element.

The protein belongs to the EutL/PduB family. As to quaternary structure, homotrimer. Forms a dimer of stacked trimers, the same faces interact. Probably forms a CsoS1-CsoS1D-CsoS2 complex.

The protein resides in the carboxysome. Its function is as follows. Part of the carboxysome shell, a polyhedral inclusion where RuBisCO (ribulose bisphosphate carboxylase, cbbL-cbbS) is sequestered. It may control transport of RuBisCO reactants in and out of the carboxysome. This Hydrogenovibrio crunogenus (strain DSM 25203 / XCL-2) (Thiomicrospira crunogena) protein is Carboxysome shell protein CsoS1D.